The primary structure comprises 90 residues: NELL2-interacting cell ontogeny regulator 1 (90 aa).

A signal peptide spans 1–26 (MVSSGYLQAVMLLLAVQLLCFRPSDA).

This sequence belongs to the NICOL family.

The protein localises to the secreted. Functionally, mRNA-binding protein which interacts with a range of target mRNAs and may promote extracellular matrix production. This chain is NELL2-interacting cell ontogeny regulator 1, found in Salmo salar (Atlantic salmon).